We begin with the raw amino-acid sequence, 474 residues long: tRNA modification GTPase MnmE (474 aa).

(6S)-5-formyl-5,6,7,8-tetrahydrofolate-binding residues include R23, E86, and K125. One can recognise a TrmE-type G domain in the interval 221 to 396 (GIPVAIVGEP…LKEKLLEYVN (176 aa)). N231 contacts K(+). GTP is bound by residues 231–236 (NVGKST), 250–256 (SEIAGTT), and 275–278 (DTAG). Residue S235 coordinates Mg(2+). K(+) is bound by residues S250, I252, and T255. T256 serves as a coordination point for Mg(2+). Residue K474 participates in (6S)-5-formyl-5,6,7,8-tetrahydrofolate binding.

It belongs to the TRAFAC class TrmE-Era-EngA-EngB-Septin-like GTPase superfamily. TrmE GTPase family. In terms of assembly, homodimer. Heterotetramer of two MnmE and two MnmG subunits. K(+) serves as cofactor.

It localises to the cytoplasm. Functionally, exhibits a very high intrinsic GTPase hydrolysis rate. Involved in the addition of a carboxymethylaminomethyl (cmnm) group at the wobble position (U34) of certain tRNAs, forming tRNA-cmnm(5)s(2)U34. This is tRNA modification GTPase MnmE from Christiangramia forsetii (strain DSM 17595 / CGMCC 1.15422 / KT0803) (Gramella forsetii).